A 556-amino-acid polypeptide reads, in one-letter code: Peptidylarginine deiminase (556 aa).

An N-terminal signal peptide occupies residues 1 to 23 (MKKLLQAKALILALGLFQLPAIA). Positions 24–43 (QTQMQADRTNGQFATEEMQR) are excised as a propeptide. Cys-351 functions as the Amidino-cysteine intermediate in the catalytic mechanism.

Belongs to the agmatine deiminase family. The cofactor is FAD. It depends on FMN as a cofactor.

Its subcellular location is the secreted. Its activity is regulated as follows. Inhibited by cysteine and TLCK. Inhibited by high concentration of thiourea and thio-L-citrulline. Deiminates the guanidino group of C-terminal arginine residues on a variety of peptides, including the vasoregulatory peptide-hormone bradykinin, to yield ammonia and a citrulline residue. May promote the growth of the pathogen in the periodontal pocket by producing ammonia, ammonia having a protective effect during acidic cleaning cycles in the mouth. The chain is Peptidylarginine deiminase from Porphyromonas gingivalis (strain ATCC BAA-308 / W83).